The chain runs to 196 residues: Serine recombinase PinQ (196 aa).

A Resolvase/invertase-type recombinase catalytic domain is found at 3 to 143 (QIFAYCRIST…SGIVRARGAG (141 aa)). S11 acts as the O-(5'-phospho-DNA)-serine intermediate in catalysis.

It belongs to the site-specific recombinase resolvase family.

The protein is Serine recombinase PinQ (pinQ) of Escherichia coli (strain K12).